The chain runs to 187 residues: MIILLTGMPGSGKGEVAKAFKKLGIPVVSMGDAIREEAEKRGIPKTPEGLKYVSLKVREELGPGAVAILIAPKLKNLLKKHKTVVVEGVRSPKEVEEFRKLFPNEEIKVLAIHSPPGARYERMRKRGRSDDPKTWEEFLDRDKKELNFGIGEVIALADYMIVNDDSFQKFKRDIEVIIRKILYFNHQ.

Residue 7-14 (GMPGSGKG) participates in ATP binding.

It belongs to the UPF0200 family.

This chain is UPF0200 protein PYRAB09750, found in Pyrococcus abyssi (strain GE5 / Orsay).